Consider the following 286-residue polypeptide: MSIKKLILAASILTTLALTGCGGKGAVQPSGVSTGDVNAKIVFDNDKVNADNVDGLSVSEREVKITKPGMYTFSGTWNDGQILVDIGKEFEAVLVLDGVNITNTKSAPIYIKSAEKVKIELADGKDNVLTDAEFYEFEDPQDNKPNACIYSRDDITIKGNGNLTVNANFNNGIGTSNDLKITGGNITVKAFNNGLKGNDSVTISGGNIDITAEADGIKVENTEEPHKGYVNITGGTIKIRAKDDAIDSVRSVSINNADVKVSVGGKDVKCEGVLNIAEGCLGKLEE.

The first 20 residues, 1–20 (MSIKKLILAASILTTLALTG), serve as a signal peptide directing secretion. C21 carries N-palmitoyl cysteine lipidation. The S-diacylglycerol cysteine moiety is linked to residue C21. Positions 124–225 (GKDNVLTDAE…GIKVENTEEP (102 aa)) are polygalacturonic acid-binding. 9 residues coordinate Ca(2+): R152, D153, D154, N177, D178, D215, D243, D244, and D247.

As to quaternary structure, monomer.

Its subcellular location is the cell membrane. Binds cellulosic and pectic substrates. Displays no enzyme activity (in vitro). The protein is Carbohydrate-binding domain-containing protein Cthe_2159 of Acetivibrio thermocellus (strain ATCC 27405 / DSM 1237 / JCM 9322 / NBRC 103400 / NCIMB 10682 / NRRL B-4536 / VPI 7372) (Clostridium thermocellum).